Here is a 156-residue protein sequence, read N- to C-terminus: MAARRPRTAPEHESDDDSYEVLDLTEYARRHHWWNRLFGRNSGPIVEKYSVATQIVMGGVTGWCAGFLFQKVGKLAATAVGGGFLLLQIASHSGYVQVDWKRVEKDVNKAKKQLKKRANKAAPEINTLIEESTEFIKQNIVVSSGFVGGFLLGLAS.

The YXXL motif lies at 19 to 22; sequence YEVL. The next 3 helical transmembrane spans lie at 49–69, 76–96, and 135–155; these read YSVA…GFLF, AATA…SGYV, and FIKQ…LGLA.

Belongs to the FUN14 family.

The protein resides in the mitochondrion outer membrane. In terms of biological role, acts as an activator of hypoxia-induced mitophagy, an important mechanism for mitochondrial quality control. The polypeptide is FUN14 domain-containing protein 1 (FUNDC1) (Gallus gallus (Chicken)).